Reading from the N-terminus, the 436-residue chain is Methylenetetrahydrofolate--tRNA-(uracil-5-)-methyltransferase TrmFO (436 aa).

An FAD-binding site is contributed by 9–14; the sequence is GAGLAG.

The protein belongs to the MnmG family. TrmFO subfamily. The cofactor is FAD.

The protein localises to the cytoplasm. It carries out the reaction uridine(54) in tRNA + (6R)-5,10-methylene-5,6,7,8-tetrahydrofolate + NADH + H(+) = 5-methyluridine(54) in tRNA + (6S)-5,6,7,8-tetrahydrofolate + NAD(+). It catalyses the reaction uridine(54) in tRNA + (6R)-5,10-methylene-5,6,7,8-tetrahydrofolate + NADPH + H(+) = 5-methyluridine(54) in tRNA + (6S)-5,6,7,8-tetrahydrofolate + NADP(+). Catalyzes the folate-dependent formation of 5-methyl-uridine at position 54 (M-5-U54) in all tRNAs. The polypeptide is Methylenetetrahydrofolate--tRNA-(uracil-5-)-methyltransferase TrmFO (Acetivibrio thermocellus (strain ATCC 27405 / DSM 1237 / JCM 9322 / NBRC 103400 / NCIMB 10682 / NRRL B-4536 / VPI 7372) (Clostridium thermocellum)).